A 397-amino-acid chain; its full sequence is Acetate kinase (397 aa).

A Mg(2+)-binding site is contributed by N8. K15 is an ATP binding site. R89 contributes to the substrate binding site. The Proton donor/acceptor role is filled by D146. ATP-binding positions include 206 to 210 (HVGNG), 283 to 285 (DMR), and 331 to 335 (GIGEN). E383 lines the Mg(2+) pocket.

This sequence belongs to the acetokinase family. Homodimer. The cofactor is Mg(2+). Requires Mn(2+) as cofactor.

It is found in the cytoplasm. It carries out the reaction acetate + ATP = acetyl phosphate + ADP. It participates in metabolic intermediate biosynthesis; acetyl-CoA biosynthesis; acetyl-CoA from acetate: step 1/2. Functionally, catalyzes the formation of acetyl phosphate from acetate and ATP. Can also catalyze the reverse reaction. This is Acetate kinase from Streptococcus thermophilus (strain ATCC BAA-491 / LMD-9).